The sequence spans 277 residues: Sulfate transport system permease protein CysT (277 aa).

Transmembrane regions (helical) follow at residues 17 to 37 (LGTSLLFVCLILLLPLSALVM), 64 to 84 (LLSAFVASIFNGVFGLLMAWI), 99 to 119 (LMDLPFALPTAVAGLTLASLF), 136 to 156 (VTYTWLGIAVAMAFTSIPFVV), 185 to 205 (FCKVVLPELSPALVAGVALSF), 215 to 235 (VIFIAGNIAWKTEVTSLMIFV), and 243 to 263 (PAASAIASVILAASLLLLFSI). Residues 60–263 (YKVTLLSAFV…AASLLLLFSI (204 aa)) enclose the ABC transmembrane type-1 domain.

The protein belongs to the binding-protein-dependent transport system permease family. CysTW subfamily. The complex is composed of two ATP-binding proteins (CysA), two transmembrane proteins (CysT and CysW) and a solute-binding protein (CysP).

It is found in the cell inner membrane. Part of the ABC transporter complex CysAWTP (TC 3.A.1.6.1) involved in sulfate/thiosulfate import. Probably responsible for the translocation of the substrate across the membrane. The chain is Sulfate transport system permease protein CysT (cysU) from Escherichia coli (strain K12).